The following is a 65-amino-acid chain: Large ribosomal subunit protein bL35 (65 aa).

The span at 1–11 (MPKIKTRRSAA) shows a compositional bias: basic residues. The segment at 1-25 (MPKIKTRRSAAKRFSVTGSGKFRRR) is disordered.

Belongs to the bacterial ribosomal protein bL35 family.

The protein is Large ribosomal subunit protein bL35 of Nitratidesulfovibrio vulgaris (strain ATCC 29579 / DSM 644 / CCUG 34227 / NCIMB 8303 / VKM B-1760 / Hildenborough) (Desulfovibrio vulgaris).